Consider the following 327-residue polypeptide: Interleukin-12 subunit beta (327 aa).

The N-terminal stretch at 1 to 22 (MHPQQLVVSWFSLVLLTSPIVA) is a signal peptide. One can recognise an Ig-like C2-type domain in the interval 23-106 (IWELEKNVYV…LSRSLLLLHK (84 aa)). Residues Cys-50 and Cys-90 are joined by a disulfide bond. The N-linked (GlcNAc...) asparagine glycan is linked to Asn-223. The 90-residue stretch at 238–327 (PPKNLQLRPL…WSEWASVSCS (90 aa)) folds into the Fibronectin type-III domain.

This sequence belongs to the IL-12B family. Heterodimer with IL12A; disulfide-linked. The heterodimer is known as interleukin IL-12. Heterodimer with IL23A; disulfide-linked. The heterodimer is known as interleukin IL-23. Also secreted as a monomer. Interacts with NBR1; this interaction promotes IL-12 secretion.

The protein localises to the secreted. Cytokine that can act as a growth factor for activated T and NK cells, enhance the lytic activity of NK/lymphokine-activated killer cells, and stimulate the production of IFN-gamma by resting PBMC. In terms of biological role, associates with IL23A to form the IL-23 interleukin, a heterodimeric cytokine which functions in innate and adaptive immunity. IL-23 may constitute with IL-17 an acute response to infection in peripheral tissues. IL-23 binds to a heterodimeric receptor complex composed of IL12RB1 and IL23R, activates the Jak-Stat signaling cascade, stimulates memory rather than naive T-cells and promotes production of pro-inflammatory cytokines. IL-23 induces autoimmune inflammation and thus may be responsible for autoimmune inflammatory diseases and may be important for tumorigenesis. The chain is Interleukin-12 subunit beta (IL12B) from Cervus elaphus (Red deer).